Reading from the N-terminus, the 91-residue chain is Putative regulatory protein Helmi_20580 (91 aa).

This sequence belongs to the RemA family.

In Heliobacterium modesticaldum (strain ATCC 51547 / Ice1), this protein is Putative regulatory protein Helmi_20580.